The chain runs to 405 residues: Elongation factor Tu (405 aa).

Positions 10–215 (KPHVNVGTIG…AIDAYIPTPE (206 aa)) constitute a tr-type G domain. A G1 region spans residues 19–26 (GHVDHGKT). 19–26 (GHVDHGKT) serves as a coordination point for GTP. Position 26 (Thr-26) interacts with Mg(2+). The tract at residues 61 to 65 (GITIN) is G2. Positions 82 to 85 (DCPG) are G3. Residues 82–86 (DCPGH) and 137–140 (NKVD) contribute to the GTP site. Residues 137-140 (NKVD) form a G4 region. The G5 stretch occupies residues 175 to 177 (SAL).

The protein belongs to the TRAFAC class translation factor GTPase superfamily. Classic translation factor GTPase family. EF-Tu/EF-1A subfamily. Monomer.

The protein localises to the cytoplasm. It catalyses the reaction GTP + H2O = GDP + phosphate + H(+). Functionally, GTP hydrolase that promotes the GTP-dependent binding of aminoacyl-tRNA to the A-site of ribosomes during protein biosynthesis. This is Elongation factor Tu from Deinococcus geothermalis (strain DSM 11300 / CIP 105573 / AG-3a).